Consider the following 294-residue polypeptide: MHPRFQTAFAQLADNLQSALAPILADKHFPALLTGEQVSSLKSATGLDEDALAFALLPLAAACARTPLSNFNVGAIARGVSGTWYFGANMEFIGATMQQTVHAEQSAISHAWLSGEKALAAITVNYTPCGHCRQFMNELNSGLDLRIHLPGREAHALRDYLPDAFGPKDLEIKTLLMDEQDHGFALTGDALSQAAIAAANRSHMPYSKSPSGVALECKDGRIFSGSYAENAAFNPTLPPLQGALILLNLKGYDYPDIQRAILAEKADAPLIQWDATAATLKALGCNTIDRVLLG.

2 consecutive CMP/dCMP-type deaminase domains span residues 48-168 (DEDA…FGPK) and 186-294 (LTGD…VLLG). 89-91 (NME) contributes to the substrate binding site. His102 provides a ligand contact to Zn(2+). Glu104 (proton donor) is an active-site residue. 2 residues coordinate Zn(2+): Cys129 and Cys132.

This sequence belongs to the cytidine and deoxycytidylate deaminase family. Homodimer. Requires Zn(2+) as cofactor.

The enzyme catalyses cytidine + H2O + H(+) = uridine + NH4(+). It catalyses the reaction 2'-deoxycytidine + H2O + H(+) = 2'-deoxyuridine + NH4(+). Functionally, this enzyme scavenges exogenous and endogenous cytidine and 2'-deoxycytidine for UMP synthesis. The sequence is that of Cytidine deaminase from Escherichia fergusonii (strain ATCC 35469 / DSM 13698 / CCUG 18766 / IAM 14443 / JCM 21226 / LMG 7866 / NBRC 102419 / NCTC 12128 / CDC 0568-73).